We begin with the raw amino-acid sequence, 568 residues long: Phosphoprotein (568 aa).

Disordered regions lie at residues 1–23 and 38–320; these read MDQDAFILKEDSEVEREAPGGRE and SEPT…GIGE. Over residues 7-20 the composition is skewed to basic and acidic residues; sequence ILKEDSEVEREAPG. An N0 binding region spans residues 33 to 41; sequence DAVLSSEPT. Over residues 50 to 59 the composition is skewed to polar residues; the sequence is LHNTINTPQG. The residue at position 68 (S68) is a Phosphoserine; by host. A compositionally biased stretch (basic and acidic residues) spans 83–101; it reads RSGEESRVSGRTSKPEAEA. Phosphoserine; by host is present on S125. The segment covering 150–168 has biased composition (basic and acidic residues); it reads GIEDENREMAAHPDKRGED. Positions 191 to 206 are enriched in polar residues; the sequence is ASNNGRSMEPGSSHSA. Phosphoserine; by host is present on residues S192, S249, S257, and S260. 2 multimerization regions span residues 344–411 and 362–432; these read FESS…KRFS and ANYA…HIIT. The tract at residues 345–412 is bipartite nucleocapsid binding domain 1; the sequence is ESSRDASYVF…FRDIYKRFSE (68 aa). Residues 364 to 429 are a coiled coil; the sequence is YAEMTFNVCG…LLMSNLSTLH (66 aa). L protein binding stretches follow at residues 412–445 and 413–445; these read EYQKEQNSLLMSNLSTLHIITDRGGKTDNTDSLT and YQKEQNSLLMSNLSTLHIITDRGGKTDNTDSLT. Phosphoserine; by host is present on residues S447 and S449. Residues 479-568 form a bipartite nucleocapsid binding domain 2 region; the sequence is DLIREDEFRD…VEEDIESLTN (90 aa). Residues 479–568 form an interaction with the nucleocapsid (N-RNA) region; sequence DLIREDEFRD…VEEDIESLTN (90 aa). The interval 495–516 is disordered; that stretch reads YQERDTEPRASNASRLLPSKEK. Residues 547 to 566 are formation of N-RNA complex involved in transcription and replication; the sequence is KTDQEVKAVMELVEEDIESL.

Belongs to the respirovirus P protein family. Homotetramer. Interacts (via multimerization domain) with polymerase L; this interaction forms the polymerase complex. Interacts (via N-terminus) with N0; this interaction allows P to chaperon N0 before encapsidation and form the N-P complex. Interacts (via C-terminus) with N-RNA template; this interaction positions the polymerase on the template. Phosphorylated by PKC/PRKCZ, and other unknown kinases. Phosphorylation is necessary for viral transcription and replication. The N-terminus contains the majority of phosphorylated sites. Ser-249 is the major site of phosphorylation, but is not necessary for most functions.

It localises to the host cytoplasm. Its function is as follows. Essential cofactor of the RNA polymerase L that plays a central role in the transcription and replication by forming the polymerase complex with RNA polymerase L and recruiting L to the genomic N-RNA template for RNA synthesis. Also plays a central role in the encapsidation of nascent RNA chains by forming the encapsidation complex with the nucleocapsid protein N (N-P complex). Acts as a chaperone for newly synthesized free N protein, so-called N0, allowing encapsidation of nascent RNA chains during replication. The nucleoprotein protein N prevents excessive phosphorylation of P, which leads to down-regulation of viral transcription/ replication. Participates, together with N, in the formation of viral factories (viroplasms), which are large inclusions in the host cytoplasm where replication takes place. Recruits host PI4KB and remodel the host endoplasmic reticulum membrane to form viral replication factories. The chain is Phosphoprotein (P/V/C) from Sendai virus (strain Fushimi) (SeV).